A 296-amino-acid polypeptide reads, in one-letter code: Ribosomal RNA small subunit methyltransferase H (296 aa).

Residues 30–32, Asp49, Phe76, Asp97, and Gln104 contribute to the S-adenosyl-L-methionine site; that span reads GGH.

It belongs to the methyltransferase superfamily. RsmH family.

The protein resides in the cytoplasm. The enzyme catalyses cytidine(1402) in 16S rRNA + S-adenosyl-L-methionine = N(4)-methylcytidine(1402) in 16S rRNA + S-adenosyl-L-homocysteine + H(+). Its function is as follows. Specifically methylates the N4 position of cytidine in position 1402 (C1402) of 16S rRNA. The chain is Ribosomal RNA small subunit methyltransferase H from Mesomycoplasma hyopneumoniae (strain 7448) (Mycoplasma hyopneumoniae).